An 892-amino-acid chain; its full sequence is Alanine--tRNA ligase (892 aa).

4 residues coordinate Zn(2+): H594, H598, C702, and H706.

This sequence belongs to the class-II aminoacyl-tRNA synthetase family. Requires Zn(2+) as cofactor.

Its subcellular location is the cytoplasm. It carries out the reaction tRNA(Ala) + L-alanine + ATP = L-alanyl-tRNA(Ala) + AMP + diphosphate. Its function is as follows. Catalyzes the attachment of alanine to tRNA(Ala) in a two-step reaction: alanine is first activated by ATP to form Ala-AMP and then transferred to the acceptor end of tRNA(Ala). Also edits incorrectly charged Ser-tRNA(Ala) and Gly-tRNA(Ala) via its editing domain. This Pyrobaculum arsenaticum (strain DSM 13514 / JCM 11321 / PZ6) protein is Alanine--tRNA ligase.